We begin with the raw amino-acid sequence, 71 residues long: Protein CYSTEINE-RICH TRANSMEMBRANE MODULE 6 (71 aa).

Over residues 1 to 12 (MSQYSQNQSSGA) the composition is skewed to polar residues. The tract at residues 1–36 (MSQYSQNQSSGAYPTPPVSTGPYVAPPPLGYPTNDT) is disordered. Pro residues predominate over residues 14-30 (PTPPVSTGPYVAPPPLG). Residues 48–64 (SKGDGFLKGCLAAMCCC) form a helical membrane-spanning segment.

Belongs to the CYSTM1 family. Homodimer and heterodimers. Interacts with CYSTM7 and WIH1/CYSTM13. In terms of tissue distribution, mostly expressed in roots, stems, rosette leaves and siliques and, to a lower extent, in flowers and cauline leaves.

The protein localises to the cell membrane. The protein resides in the cytoplasm. Its function is as follows. Involved in resistance to abiotic stress. The chain is Protein CYSTEINE-RICH TRANSMEMBRANE MODULE 6 from Arabidopsis thaliana (Mouse-ear cress).